A 436-amino-acid chain; its full sequence is 3-phosphoshikimate 1-carboxyvinyltransferase (436 aa).

3-phosphoshikimate contacts are provided by K22, S23, and R27. A phosphoenolpyruvate-binding site is contributed by K22. Residues G95 and R123 each coordinate phosphoenolpyruvate. 3-phosphoshikimate is bound by residues S170, S171, Q172, S201, D322, and K349. Q172 is a phosphoenolpyruvate binding site. D322 acts as the Proton acceptor in catalysis. Positions 353, 397, and 422 each coordinate phosphoenolpyruvate.

It belongs to the EPSP synthase family. In terms of assembly, monomer.

It localises to the cytoplasm. The catalysed reaction is 3-phosphoshikimate + phosphoenolpyruvate = 5-O-(1-carboxyvinyl)-3-phosphoshikimate + phosphate. The protein operates within metabolic intermediate biosynthesis; chorismate biosynthesis; chorismate from D-erythrose 4-phosphate and phosphoenolpyruvate: step 6/7. Its function is as follows. Catalyzes the transfer of the enolpyruvyl moiety of phosphoenolpyruvate (PEP) to the 5-hydroxyl of shikimate-3-phosphate (S3P) to produce enolpyruvyl shikimate-3-phosphate and inorganic phosphate. This is 3-phosphoshikimate 1-carboxyvinyltransferase from Ralstonia nicotianae (strain ATCC BAA-1114 / GMI1000) (Ralstonia solanacearum).